The chain runs to 385 residues: Leucine aminopeptidase 1 (385 aa).

The signal sequence occupies residues 1 to 19; the sequence is MKFPNLLSLGVAASTTVLA. The propeptide occupies 20–87; it reads AVPNQKPIGD…FPRTFAQTTV (68 aa). N177 carries an N-linked (GlcNAc...) asparagine glycan. Zn(2+)-binding residues include H185, D204, E243, and D270. C319 and C323 are joined by a disulfide. Residue H352 coordinates Zn(2+).

It belongs to the peptidase M28 family. M28E subfamily. As to quaternary structure, monomer. Requires Zn(2+) as cofactor.

Its subcellular location is the secreted. Its function is as follows. Extracellular aminopeptidase that allows assimilation of proteinaceous substrates. In Ajellomyces capsulatus (strain H88) (Darling's disease fungus), this protein is Leucine aminopeptidase 1 (LAP1).